The primary structure comprises 364 residues: Dual-specificity RNA methyltransferase RlmN (364 aa).

E91 functions as the Proton acceptor in the catalytic mechanism. The region spanning 102 to 337 is the Radical SAM core domain; it reads GTLRITQCLS…AIIRKSKGQD (236 aa). A disulfide bond links C109 and C342. C116, C120, and C123 together coordinate [4Fe-4S] cluster. Residues 169–170, S201, 223–225, and N299 contribute to the S-adenosyl-L-methionine site; these read GE and SLH. C342 (S-methylcysteine intermediate) is an active-site residue.

Belongs to the radical SAM superfamily. RlmN family. The cofactor is [4Fe-4S] cluster.

Its subcellular location is the cytoplasm. The enzyme catalyses adenosine(2503) in 23S rRNA + 2 reduced [2Fe-2S]-[ferredoxin] + 2 S-adenosyl-L-methionine = 2-methyladenosine(2503) in 23S rRNA + 5'-deoxyadenosine + L-methionine + 2 oxidized [2Fe-2S]-[ferredoxin] + S-adenosyl-L-homocysteine. It catalyses the reaction adenosine(37) in tRNA + 2 reduced [2Fe-2S]-[ferredoxin] + 2 S-adenosyl-L-methionine = 2-methyladenosine(37) in tRNA + 5'-deoxyadenosine + L-methionine + 2 oxidized [2Fe-2S]-[ferredoxin] + S-adenosyl-L-homocysteine. Functionally, specifically methylates position 2 of adenine 2503 in 23S rRNA and position 2 of adenine 37 in tRNAs. m2A2503 modification seems to play a crucial role in the proofreading step occurring at the peptidyl transferase center and thus would serve to optimize ribosomal fidelity. This Nitratidesulfovibrio vulgaris (strain DP4) (Desulfovibrio vulgaris) protein is Dual-specificity RNA methyltransferase RlmN.